The chain runs to 103 residues: NADH-ubiquinone oxidoreductase chain 4L (103 aa).

The next 3 helical transmembrane spans lie at 6–26 (IFFL…GIFI), 31–51 (IIII…NFAI), and 65–85 (ILYT…ILII).

The protein belongs to the complex I subunit 4L family.

The protein resides in the mitochondrion membrane. The enzyme catalyses a ubiquinone + NADH + 5 H(+)(in) = a ubiquinol + NAD(+) + 4 H(+)(out). In terms of biological role, core subunit of the mitochondrial membrane respiratory chain NADH dehydrogenase (Complex I) that is believed to belong to the minimal assembly required for catalysis. Complex I functions in the transfer of electrons from NADH to the respiratory chain. The immediate electron acceptor for the enzyme is believed to be ubiquinone. This is NADH-ubiquinone oxidoreductase chain 4L (ND4L) from Acanthamoeba castellanii (Amoeba).